The sequence spans 460 residues: MSSNQYTAGAVILAAGKGTRMYSDKPKVLQPLLGEPMLRFVYRALDPLFSKAVWTVIGHGADMVRKAFCHEDREFVLQEKQLGTGHALQCAWDKVTASGIDYVLVINGDTPLVRPDSIVRLLDRTAGSGADVGFITLTLEDPAAFGRVVRRHGHVAAVIEAKDYDTAQHGPEPREINAGIYLLKVAAVSPLLPLLTNANASGEYYITDIVELAVRQGLRVEGVECGNDPDLLGVNTPAELMRSEELLRENIVTRHLHNGVHVHAAGSVRIGPDVVIEPGAVIHGPCELYGNTFVGAQAVIDSHCWVKDSRLHPGSTLRNFSHAEQAEIATGAVAGPYARLRPGAVLEQDARMGNFVEMKKAVLRKGAKASHLTYLGDADIGSEANIGAGTITCNYDGVNKHRTVIGEKAFIGSNTALVAPVSIGKQALVGAGSVITKDVEDGELAIARGRQKNLRKTRHS.

Residues 1–237 (MSSNQYTAGA…DPDLLGVNTP (237 aa)) form a pyrophosphorylase region. UDP-N-acetyl-alpha-D-glucosamine is bound by residues 13–16 (LAAG), lysine 27, glutamine 78, and 83–84 (GT). Aspartate 109 serves as a coordination point for Mg(2+). Residues glycine 146, glutamate 160, asparagine 177, and asparagine 235 each contribute to the UDP-N-acetyl-alpha-D-glucosamine site. Mg(2+) is bound at residue asparagine 235. A linker region spans residues 238–258 (AELMRSEELLRENIVTRHLHN). The interval 259–460 (GVHVHAAGSV…QKNLRKTRHS (202 aa)) is N-acetyltransferase. Residues arginine 341 and lysine 359 each coordinate UDP-N-acetyl-alpha-D-glucosamine. Histidine 371 functions as the Proton acceptor in the catalytic mechanism. UDP-N-acetyl-alpha-D-glucosamine is bound by residues tyrosine 374 and asparagine 385. Acetyl-CoA-binding positions include alanine 388, 394–395 (NY), serine 413, alanine 431, and arginine 448.

It in the N-terminal section; belongs to the N-acetylglucosamine-1-phosphate uridyltransferase family. This sequence in the C-terminal section; belongs to the transferase hexapeptide repeat family. In terms of assembly, homotrimer. Mg(2+) is required as a cofactor.

It localises to the cytoplasm. The enzyme catalyses alpha-D-glucosamine 1-phosphate + acetyl-CoA = N-acetyl-alpha-D-glucosamine 1-phosphate + CoA + H(+). The catalysed reaction is N-acetyl-alpha-D-glucosamine 1-phosphate + UTP + H(+) = UDP-N-acetyl-alpha-D-glucosamine + diphosphate. It participates in nucleotide-sugar biosynthesis; UDP-N-acetyl-alpha-D-glucosamine biosynthesis; N-acetyl-alpha-D-glucosamine 1-phosphate from alpha-D-glucosamine 6-phosphate (route II): step 2/2. It functions in the pathway nucleotide-sugar biosynthesis; UDP-N-acetyl-alpha-D-glucosamine biosynthesis; UDP-N-acetyl-alpha-D-glucosamine from N-acetyl-alpha-D-glucosamine 1-phosphate: step 1/1. The protein operates within bacterial outer membrane biogenesis; LPS lipid A biosynthesis. In terms of biological role, catalyzes the last two sequential reactions in the de novo biosynthetic pathway for UDP-N-acetylglucosamine (UDP-GlcNAc). The C-terminal domain catalyzes the transfer of acetyl group from acetyl coenzyme A to glucosamine-1-phosphate (GlcN-1-P) to produce N-acetylglucosamine-1-phosphate (GlcNAc-1-P), which is converted into UDP-GlcNAc by the transfer of uridine 5-monophosphate (from uridine 5-triphosphate), a reaction catalyzed by the N-terminal domain. The polypeptide is Bifunctional protein GlmU (Oleidesulfovibrio alaskensis (strain ATCC BAA-1058 / DSM 17464 / G20) (Desulfovibrio alaskensis)).